A 334-amino-acid polypeptide reads, in one-letter code: MIIAVDGMGGDFAPYAVVEGIIEAVKEQDINIIITGKKELIEAELKKYEYEREKIRILDTREVITTSESPVMALRRKKDSSLVKALQLVKEGKADAAISAGSTGALMSGATLIVGRIKGIERVALAPMIPGKNGAFMIIDAGANVDCKPHYLLQFSLMGKIYFENVLKIKEPSIGLVNIGTEEEKGNELTKNTYKLLKDMDFNFVGNVEPREATNGDVNILVCDGFVGNTILKTYEGVSLNLIHMIKEEIMKSTTSKLAGVFLKPVFKKIKSRLDYSEYGGSAFLGCKGICVKAHGSSNGKAFKNAIKQAVICYDNKVIDKIKFEIEKIYNREE.

This sequence belongs to the PlsX family. As to quaternary structure, homodimer. Probably interacts with PlsY.

It is found in the cytoplasm. The catalysed reaction is a fatty acyl-[ACP] + phosphate = an acyl phosphate + holo-[ACP]. Its pathway is lipid metabolism; phospholipid metabolism. Functionally, catalyzes the reversible formation of acyl-phosphate (acyl-PO(4)) from acyl-[acyl-carrier-protein] (acyl-ACP). This enzyme utilizes acyl-ACP as fatty acyl donor, but not acyl-CoA. The protein is Phosphate acyltransferase of Clostridium kluyveri (strain NBRC 12016).